Here is a 281-residue protein sequence, read N- to C-terminus: NADPH-dependent 7-cyano-7-deazaguanine reductase (281 aa).

88–90 is a substrate binding site; it reads IES. 90-91 serves as a coordination point for NADPH; the sequence is SK. The active-site Thioimide intermediate is Cys189. Asp196 (proton donor) is an active-site residue. 228 to 229 contacts substrate; sequence HE. Position 257 to 258 (257 to 258) interacts with NADPH; it reads RG.

It belongs to the GTP cyclohydrolase I family. QueF type 2 subfamily. In terms of assembly, homodimer.

It localises to the cytoplasm. The enzyme catalyses 7-aminomethyl-7-carbaguanine + 2 NADP(+) = 7-cyano-7-deazaguanine + 2 NADPH + 3 H(+). It functions in the pathway tRNA modification; tRNA-queuosine biosynthesis. Its function is as follows. Catalyzes the NADPH-dependent reduction of 7-cyano-7-deazaguanine (preQ0) to 7-aminomethyl-7-deazaguanine (preQ1). This chain is NADPH-dependent 7-cyano-7-deazaguanine reductase, found in Yersinia pseudotuberculosis serotype O:1b (strain IP 31758).